A 360-amino-acid chain; its full sequence is MPTILVSALEASSNVHLEELRHNLPKDYRFIGVFEGKNALYSPREFSVMGFRDVIGRLGFLLKAHKEMVQLAKQADMVLLMDSSSFNIPLAKKIKKQDPHKKIMYYILPQVWAWKKWRAKSLEKYCDFLGAILPFEVGYYQKKAQYVGHPLLDEIKYYKKDIKGETLVFMPGSRKSEIAKMFPLFVKAAQILEQNEGFKRRVLVVPSFFKGLDLKALYGEDIKLFEISYDAHKSLFEAEFAFICSGTATLEAALIGTPFVLAYRAKTMDFLIARMLVNLHYIGLANIFYNALNNETPGLGESQLHPELIQHFLSVEGLLKAYEEMDRERYFKESLRLREYLASGSTRKIANEMAFLLNLT.

The protein belongs to the LpxB family.

It carries out the reaction a lipid X + a UDP-2-N,3-O-bis[(3R)-3-hydroxyacyl]-alpha-D-glucosamine = a lipid A disaccharide + UDP + H(+). The protein operates within bacterial outer membrane biogenesis; LPS lipid A biosynthesis. In terms of biological role, condensation of UDP-2,3-diacylglucosamine and 2,3-diacylglucosamine-1-phosphate to form lipid A disaccharide, a precursor of lipid A, a phosphorylated glycolipid that anchors the lipopolysaccharide to the outer membrane of the cell. This is Lipid-A-disaccharide synthase from Helicobacter pylori (strain P12).